A 355-amino-acid chain; its full sequence is Phenylalanine--tRNA ligase alpha subunit (355 aa).

Glu-273 contributes to the Mg(2+) binding site.

This sequence belongs to the class-II aminoacyl-tRNA synthetase family. Phe-tRNA synthetase alpha subunit type 1 subfamily. In terms of assembly, tetramer of two alpha and two beta subunits. Mg(2+) serves as cofactor.

It localises to the cytoplasm. The enzyme catalyses tRNA(Phe) + L-phenylalanine + ATP = L-phenylalanyl-tRNA(Phe) + AMP + diphosphate + H(+). The sequence is that of Phenylalanine--tRNA ligase alpha subunit from Bifidobacterium longum (strain NCC 2705).